The following is a 118-amino-acid chain: 5-hydroxyisourate hydrolase (118 aa).

Residues His-7, Arg-46, and Tyr-115 each contribute to the substrate site.

This sequence belongs to the transthyretin family. 5-hydroxyisourate hydrolase subfamily. In terms of assembly, homotetramer.

The catalysed reaction is 5-hydroxyisourate + H2O = 5-hydroxy-2-oxo-4-ureido-2,5-dihydro-1H-imidazole-5-carboxylate + H(+). Its function is as follows. Catalyzes the hydrolysis of 5-hydroxyisourate (HIU) to 2-oxo-4-hydroxy-4-carboxy-5-ureidoimidazoline (OHCU). The polypeptide is 5-hydroxyisourate hydrolase (Brucella melitensis biotype 1 (strain ATCC 23456 / CCUG 17765 / NCTC 10094 / 16M)).